We begin with the raw amino-acid sequence, 533 residues long: Probable lipid II flippase MurJ (533 aa).

Helical transmembrane passes span 25-45 (ETLM…YAAF), 90-110 (VLFS…PLLV), 131-151 (LAAV…MSGM), 158-178 (FFAA…ALFY), 192-212 (YLSW…YIGV), 233-253 (LLLL…NLVI), 274-294 (IYQL…LPEL), 316-336 (FVLF…DDII), 350-370 (TTLV…FVLI), 389-409 (YTAI…PVLA), 412-432 (GIAL…FVTL), 449-469 (AMLL…SHRW), and 484-504 (GVLG…AFLI).

It belongs to the MurJ/MviN family.

It is found in the cell inner membrane. The protein operates within cell wall biogenesis; peptidoglycan biosynthesis. Involved in peptidoglycan biosynthesis. Transports lipid-linked peptidoglycan precursors from the inner to the outer leaflet of the cytoplasmic membrane. The chain is Probable lipid II flippase MurJ from Rhizobium tropici.